Reading from the N-terminus, the 129-residue chain is Follitropin subunit beta (129 aa).

A signal peptide spans 1 to 18 (MKSVQLCLLLWCWRAICC). 6 disulfides stabilise this stretch: Cys21/Cys69, Cys35/Cys84, Cys38/Cys122, Cys46/Cys100, Cys50/Cys102, and Cys105/Cys112. Asn25 and Asn42 each carry an N-linked (GlcNAc...) asparagine glycan.

Belongs to the glycoprotein hormones subunit beta family. In terms of assembly, heterodimer. The active follitropin is a heterodimer composed of an alpha chain/CGA shared with other hormones and a unique beta chain/FSHB shown here.

It localises to the secreted. Its function is as follows. Together with the alpha chain CGA constitutes follitropin, the follicle-stimulating hormone, and provides its biological specificity to the hormone heterodimer. Binds FSHR, a G protein-coupled receptor, on target cells to activate downstream signaling pathways. Follitropin is involved in follicle development and spermatogenesis in reproductive organs. The chain is Follitropin subunit beta (FSHB) from Meriones unguiculatus (Mongolian jird).